The sequence spans 351 residues: Hydroxymethylglutaryl-CoA synthase (351 aa).

Glutamate 80 serves as the catalytic Proton donor/acceptor. Cysteine 112 (acyl-thioester intermediate) is an active-site residue. (3S)-3-hydroxy-3-methylglutaryl-CoA-binding residues include cysteine 112 and serine 153. Arginine 199 is a CoA binding site. 2 residues coordinate (3S)-3-hydroxy-3-methylglutaryl-CoA: threonine 201 and histidine 234. Histidine 234 functions as the Proton donor/acceptor in the catalytic mechanism. Lysine 239 provides a ligand contact to CoA. (3S)-3-hydroxy-3-methylglutaryl-CoA contacts are provided by arginine 243, asparagine 266, and serine 296.

Belongs to the thiolase-like superfamily. Archaeal HMG-CoA synthase family. Interacts with acetoacetyl-CoA thiolase that catalyzes the precedent step in the pathway and with a DUF35 protein. The acetoacetyl-CoA thiolase/HMG-CoA synthase complex channels the intermediate via a fused CoA-binding site, which allows for efficient coupling of the endergonic thiolase reaction with the exergonic HMGCS reaction.

It catalyses the reaction acetoacetyl-CoA + acetyl-CoA + H2O = (3S)-3-hydroxy-3-methylglutaryl-CoA + CoA + H(+). It participates in metabolic intermediate biosynthesis; (R)-mevalonate biosynthesis; (R)-mevalonate from acetyl-CoA: step 2/3. In terms of biological role, catalyzes the condensation of acetyl-CoA with acetoacetyl-CoA to form 3-hydroxy-3-methylglutaryl-CoA (HMG-CoA). Functions in the mevalonate (MVA) pathway leading to isopentenyl diphosphate (IPP), a key precursor for the biosynthesis of isoprenoid compounds that are building blocks of archaeal membrane lipids. This Thermoplasma volcanium (strain ATCC 51530 / DSM 4299 / JCM 9571 / NBRC 15438 / GSS1) protein is Hydroxymethylglutaryl-CoA synthase.